The following is a 296-amino-acid chain: Cbb3-type cytochrome c oxidase subunit CcoP (296 aa).

Residues 1-31 (MAQNYKDELSGVETTGHEWDGLRELNNPLPK) lie on the Cytoplasmic side of the membrane. Residues 32-52 (WWLYLFYVCIAWAMVYYVFYP) traverse the membrane as a helical segment. The Periplasmic segment spans residues 53 to 296 (AWPLGKTYTK…VYVHNLGGGK (244 aa)). Cytochrome c domains are found at residues 108 to 200 (FAMA…LSLN) and 207 to 293 (GKVA…HNLG). The heme c site is built by Cys-121, Cys-124, His-125, Met-175, Cys-220, Cys-223, His-224, and Met-270.

This sequence belongs to the CcoP / FixP family. Component of the cbb3-type cytochrome c oxidase at least composed of CcoN, CcoO, CcoQ and CcoP. The cofactor is heme c.

The protein localises to the cell inner membrane. Its pathway is energy metabolism; oxidative phosphorylation. In terms of biological role, C-type cytochrome. Part of the cbb3-type cytochrome c oxidase complex. CcoP subunit is required for transferring electrons from donor cytochrome c via its heme groups to CcoO subunit. From there, electrons are shuttled to the catalytic binuclear center of CcoN subunit where oxygen reduction takes place. The complex also functions as a proton pump. This chain is Cbb3-type cytochrome c oxidase subunit CcoP, found in Azospirillum sp. (strain B510).